Here is a 666-residue protein sequence, read N- to C-terminus: N-acetylgalactosaminyltransferase 6 (666 aa).

Residues 1-11 lie on the Cytoplasmic side of the membrane; the sequence is MRRPNLKWIVK. A helical; Signal-anchor for type II membrane protein transmembrane segment spans residues 12 to 31; it reads ASLLLLISLTLFVLITSWIS. The Lumenal segment spans residues 32–666; it reads STPYTNKPVH…NYSQDLVLSL (635 aa). A disordered region spans residues 90–126; it reads EPVEEEVDNPHPADDEPQQQPQEELQMAAPADASVKK. Positions 107–120 are enriched in low complexity; sequence QQQPQEELQMAAPA. An N-linked (GlcNAc...) asparagine glycan is attached at asparagine 181. Cystine bridges form between cysteine 192/cysteine 421, cysteine 412/cysteine 491, cysteine 531/cysteine 548, cysteine 577/cysteine 594, and cysteine 621/cysteine 636. The interval 201-311 is catalytic subdomain A; it reads LPTVSVIIIF…YNWLPPLLEP (111 aa). Substrate-binding residues include aspartate 242 and arginine 272. A glycan (N-linked (GlcNAc...) asparagine) is linked at asparagine 285. Aspartate 295 is a Mn(2+) binding site. Position 296 (serine 296) interacts with substrate. Histidine 297 is a Mn(2+) binding site. A catalytic subdomain B region spans residues 367–429; the sequence is PFKSPIMAGG…PCSRIGHIYR (63 aa). Tryptophan 398 is a substrate binding site. Residue histidine 426 participates in Mn(2+) binding. Arginine 429 is a binding site for substrate. The Ricin B-type lectin domain occupies 518-648; sequence AMGALQNVGN…DNRFQQWNFG (131 aa). Asparagine 651 and asparagine 657 each carry an N-linked (GlcNAc...) asparagine glycan.

This sequence belongs to the glycosyltransferase 2 family. GalNAc-T subfamily. It depends on Mn(2+) as a cofactor. In terms of tissue distribution, expressed during oogenesis, in the somatically derived follicle cells that surround the developing oocyte, which are involved in the maturation of the oocyte and construction of the egg shell, as well as playing a role in subsequent embryonic pattern formation. Expressed in the salivary glands from embryonic stage 12 onwards, becoming stronger at stage 13. During embryonic stages 12-13, also expressed in the posterior midgut and hindgut. During embryonic stages 14-15, expression continues in the hindgut. Expression is detected in the epidermis and antennomaxillary complex during embryonic stages 16-17. In third instar larvae, ubiquitously expressed in wing, eye-antennal, leg and haltere imaginal disks.

Its subcellular location is the golgi apparatus membrane. The enzyme catalyses L-seryl-[protein] + UDP-N-acetyl-alpha-D-galactosamine = a 3-O-[N-acetyl-alpha-D-galactosaminyl]-L-seryl-[protein] + UDP + H(+). It catalyses the reaction L-threonyl-[protein] + UDP-N-acetyl-alpha-D-galactosamine = a 3-O-[N-acetyl-alpha-D-galactosaminyl]-L-threonyl-[protein] + UDP + H(+). It participates in protein modification; protein glycosylation. Glycopeptide transferase involved in O-linked oligosaccharide biosynthesis, which catalyzes the transfer of an N-acetyl-D-galactosamine residue to an already glycosylated peptide. In contrast to other proteins of the family, it does not act as a peptide transferase that transfers GalNAc onto serine or threonine residue on the protein receptor, but instead requires the prior addition of a GalNAc on a peptide before adding additional GalNAc moieties. Some peptide transferase activity is however not excluded, considering that its appropriate peptide substrate may remain unidentified. Prefers the diglycosylated Muc5AC-3/13 as substrate. Might have a role in protein O-glycosylation in the Golgi and thereby in establishing and/or maintaining a proper secretory apparatus structure. The chain is N-acetylgalactosaminyltransferase 6 from Drosophila melanogaster (Fruit fly).